Reading from the N-terminus, the 879-residue chain is Metabotropic glutamate receptor 3 (879 aa).

A signal peptide spans 1–22 (MKMLTRLQVLMLALFSKGFLVS). Residues 23-576 (LGDHNFMRRE…EDYIRWEDAW (554 aa)) are Extracellular-facing. Cysteines 57 and 99 form a disulfide. Residues S151 and 172–174 (AST) each bind L-glutamate. N209 is a glycosylation site (N-linked (GlcNAc...) asparagine). L-glutamate is bound at residue Y222. Intrachain disulfides connect C240-C527, C361-C373, C412-C419, C509-C528, C513-C531, C534-C546, and C549-C562. N-linked (GlcNAc...) asparagine glycosylation is present at N292. D301 lines the L-glutamate pocket. K389 lines the L-glutamate pocket. N-linked (GlcNAc...) asparagine glycans are attached at residues N414 and N439. The helical transmembrane segment at 577–599 (AIGPVTIACLGFMCTCIVITVFI) threads the bilayer. At 600 to 613 (KHNNTPLVKASGRE) the chain is on the cytoplasmic side. The helical transmembrane segment at 614–634 (LCYILLFGVSLSYCMTFFFIA) threads the bilayer. The Extracellular segment spans residues 635–645 (KPSPVICALRR). The chain crosses the membrane as a helical span at residues 646–664 (LGLGTSFAICYSALLTKTN). Residues 665–688 (CIARIFDGVKNGAQRPKFISPSSQ) lie on the Cytoplasmic side of the membrane. A helical transmembrane segment spans residues 689-709 (VFICLGLILVQIVMVSVWLIL). Topologically, residues 710-734 (ETPGTRRYTLPEKRETVILKCNVKD) are extracellular. The chain crosses the membrane as a helical span at residues 735-756 (SSMLISLTYDVVLVILCTVYAF). Topologically, residues 757 to 769 (KTRKCPENFNEAK) are cytoplasmic. The helical transmembrane segment at 770 to 792 (FIGFTMYTTCIIWLAFLPIFYVT) threads the bilayer. The Extracellular portion of the chain corresponds to 793–802 (SSDYRVQTTT). A helical membrane pass occupies residues 803–828 (MCISVSLSGFVVLGCLFAPKVHIVLF). Topologically, residues 829–879 (QPQKNVVTHRLHLNRFSVSGTATTYSQSSASTYVPTVCNGREVLDSTTSSL) are cytoplasmic.

Belongs to the G-protein coupled receptor 3 family. As to quaternary structure, interacts with TAMALIN.

It is found in the cell membrane. In terms of biological role, G-protein coupled receptor for glutamate. Ligand binding causes a conformation change that triggers signaling via guanine nucleotide-binding proteins (G proteins) and modulates the activity of down-stream effectors. Signaling inhibits adenylate cyclase activity. This chain is Metabotropic glutamate receptor 3 (Grm3), found in Mus musculus (Mouse).